A 63-amino-acid polypeptide reads, in one-letter code: MRCLPVFIVLLLLIVSAPGFDARPKTEDDVPLSSFHDDLQRTVRTLLDIRMCCLGTSGCCPWG.

A signal peptide spans 1-19 (MRCLPVFIVLLLLIVSAPG). A propeptide spanning residues 20–49 (FDARPKTEDDVPLSSFHDDLQRTVRTLLDI) is cleaved from the precursor. A Tryptophan amide modification is found at tryptophan 62.

This sequence belongs to the conotoxin T superfamily. Contains 2 disulfide bonds that can be either 'C1-C3, C2-C4' or 'C1-C4, C2-C3', since these disulfide connectivities have been observed for conotoxins with cysteine framework V (for examples, see AC P0DQQ7 and AC P81755). Expressed by the venom duct.

It is found in the secreted. The chain is Conotoxin PnMRCL-0111 from Conus pennaceus (Feathered cone).